A 210-amino-acid polypeptide reads, in one-letter code: Protein DrgA (210 aa).

The protein belongs to the nitroreductase family. The cofactor is FMN.

Its function is as follows. Controls resistance to the herbicide Dinoseb and metronidazole. Involved in detoxification of Dinoseb via the reduction of the nitro group(s) and this process is accompanied by the formation of toxic superoxide anions. The protein is Protein DrgA (drgA) of Synechocystis sp. (strain ATCC 27184 / PCC 6803 / Kazusa).